A 424-amino-acid chain; its full sequence is Type II methyltransferase M.XorII (424 aa).

Positions 4–367 constitute an SAM-dependent MTase C5-type domain; sequence PIGIDLFAGA…GQIMKALRKK (364 aa). C83 is a catalytic residue. The disordered stretch occupies residues 404–424; sequence RSRPVDRPAPRRHEERELVTA. Residues 406–424 show a composition bias toward basic and acidic residues; sequence RPVDRPAPRRHEERELVTA.

It belongs to the class I-like SAM-binding methyltransferase superfamily. C5-methyltransferase family.

The enzyme catalyses a 2'-deoxycytidine in DNA + S-adenosyl-L-methionine = a 5-methyl-2'-deoxycytidine in DNA + S-adenosyl-L-homocysteine + H(+). Functionally, a methylase that recognizes the double-stranded sequence 5'-CGATCG-3', methylates C-? on both strands and protects the DNA from cleavage by the XorII endonuclease. The chain is Type II methyltransferase M.XorII (xorIIM) from Xanthomonas oryzae pv. oryzae (strain KACC10331 / KXO85).